Here is a 146-residue protein sequence, read N- to C-terminus: Angiogenin (146 aa).

The signal sequence occupies residues 1 to 24 (MAMSLCPLLLVFVLGLGLTPPSLA). Q25 bears the Pyrrolidone carboxylic acid mark. Catalysis depends on H37, which acts as the Proton acceptor. Residue R45 participates in tRNA binding. Cystine bridges form between C50–C105, C63–C116, and C81–C131. Residues 55–59 (VRRHL) carry the Nucleolar localization signal motif. TRNA-binding residues include C105 and I127. The active-site Proton donor is the H138.

Belongs to the pancreatic ribonuclease family. As to quaternary structure, homodimer. Interacts with RNH1; inhibiting ANG ribonuclease activity. Interacts with PCNA.

The protein resides in the secreted. It is found in the nucleus. It localises to the nucleolus. Its subcellular location is the cytoplasm. The protein localises to the stress granule. Its activity is regulated as follows. Has weak tRNA ribonuclease activity by itself due to partial autoinhibition by its C-terminus, which folds into a short alpha-helix that partially occludes the substrate-binding site. In absence of stress, the ribonuclease activity is inhibited by RNH1 in the cytoplasm. In response to stress, dissociates from RNH1 in the cytoplasm and associates with cytoplasmic ribosomes with vacant A-sites: ribosomes directly activate the tRNA ribonuclease activity of ANG by refolding the C-terminal alpha-helix. In response to stress, the angiogenic activity of ANG is inhibited by RNH1 in the nucleus. In terms of biological role, secreted ribonuclease that can either promote or restrict cell proliferation of target cells, depending on the context. Endocytosed in target cells via its receptor PLXNB2 and translocates to the cytoplasm or nucleus. Under stress conditions, localizes to the cytoplasm and promotes the assembly of stress granules (SGs): specifically cleaves a subset of tRNAs within anticodon loops to produce tRNA-derived stress-induced fragments (tiRNAs), resulting in translation repression and inhibition of cell proliferation. tiRNas also prevent formation of apoptosome, thereby promoting cell survival. Preferentially cleaves RNAs between a pyrimidine and an adenosine residue, suggesting that it cleaves the anticodon loop of tRNA(Ala) (32-UUAGCAU-38) after positions 33 and 36. Cleaves a subset of tRNAs, including tRNA(Ala), tRNA(Glu), tRNA(Gly), tRNA(Lys), tRNA(Val), tRNA(His), tRNA(Asp) and tRNA(Sec). Under growth conditions and in differentiated cells, translocates to the nucleus and stimulates ribosomal RNA (rRNA) transcription, including that containing the initiation site sequences of 45S rRNA, thereby promoting cell growth and proliferation. Angiogenin induces vascularization of normal and malignant tissues via its ability to promote rRNA transcription. Involved in hematopoietic stem and progenitor cell (HSPC) growth and survival by promoting rRNA transcription in growth conditions and inhibiting translation in response to stress, respectively. Mediates the crosstalk between myeloid and intestinal epithelial cells to protect the intestinal epithelial barrier integrity: secreted by myeloid cells and promotes intestinal epithelial cells proliferation and survival. Also mediates osteoclast-endothelial cell crosstalk in growing bone: produced by osteoclasts and protects the neighboring vascular cells against senescence by promoting rRNA transcription. The protein is Angiogenin (ANG) of Equus caballus (Horse).